We begin with the raw amino-acid sequence, 441 residues long: Glutamyl-tRNA reductase (441 aa).

Residues 64-67, Ser123, 128-130, and Gln134 each bind substrate; these read TCNR and ETQ. Residue Cys65 is the Nucleophile of the active site. Residue 203–208 participates in NADP(+) binding; sequence GAGEMI.

Belongs to the glutamyl-tRNA reductase family. In terms of assembly, homodimer.

It catalyses the reaction (S)-4-amino-5-oxopentanoate + tRNA(Glu) + NADP(+) = L-glutamyl-tRNA(Glu) + NADPH + H(+). Its pathway is porphyrin-containing compound metabolism; protoporphyrin-IX biosynthesis; 5-aminolevulinate from L-glutamyl-tRNA(Glu): step 1/2. Its function is as follows. Catalyzes the NADPH-dependent reduction of glutamyl-tRNA(Glu) to glutamate 1-semialdehyde (GSA). The protein is Glutamyl-tRNA reductase of Burkholderia pseudomallei (strain K96243).